The chain runs to 367 residues: Inositol-3-phosphate synthase (367 aa).

Asp78, Ala137, Tyr157, Ser200, Asp235, and Lys248 together coordinate NAD(+).

Belongs to the myo-inositol 1-phosphate synthase family. The cofactor is NAD(+).

The enzyme catalyses D-glucose 6-phosphate = 1D-myo-inositol 3-phosphate. Functionally, key enzyme in myo-inositol biosynthesis pathway that catalyzes the conversion of glucose 6-phosphate to 1D-myo-inositol 3-phosphate in a NAD-dependent manner. This chain is Inositol-3-phosphate synthase (ino1), found in Mycobacterium tuberculosis (strain CDC 1551 / Oshkosh).